The chain runs to 337 residues: Eukaryotic translation initiation factor 3 subunit H (337 aa).

In terms of domain architecture, MPN spans 21-153 (VQCDGLAVMK…LKAYRLTPQA (133 aa)).

Belongs to the eIF-3 subunit H family. Component of the eukaryotic translation initiation factor 3 (eIF-3) complex. The eIF-3 complex interacts with pix. Interacts with mxt.

The protein resides in the cytoplasm. In terms of biological role, component of the eukaryotic translation initiation factor 3 (eIF-3) complex, which is involved in protein synthesis of a specialized repertoire of mRNAs and, together with other initiation factors, stimulates binding of mRNA and methionyl-tRNAi to the 40S ribosome. The eIF-3 complex specifically targets and initiates translation of a subset of mRNAs involved in cell proliferation. This Drosophila grimshawi (Hawaiian fruit fly) protein is Eukaryotic translation initiation factor 3 subunit H.